Reading from the N-terminus, the 143-residue chain is MRYLHKIELELNRLTSRYPFFKKIAFDAEIIKLVDDLNVDENVKCAIVAIDTSMRMQDFINEDNKDSFVLSTDVLSALFYKYLSQPFYQHDFLVLTDCVSRINELKSIRATITDEIALHNINKQIHYMFIQPYMNNEKVVSYE.

As to quaternary structure, dimer of heterodimer or heterotetramer composed of a small (Hexs-a) and large (Hexs-B) subunit.

It catalyses the reaction 3 isopentenyl diphosphate + (2E,6E)-farnesyl diphosphate = all-trans-hexaprenyl diphosphate + 3 diphosphate. Functionally, catalyzes the condensation of three molecules of isopentenyl diphosphate with farnesyl diphosphate (FPP) to yield (all-E)-hexaprenyl diphosphate (HexPP; C30), the precursor of the prenyl side chain of menaquinone-6. Large subunit Hexs-B catalyzes the condensation reaction and the final product chain length is cooperatively regulated by both the Hexs-A and Hexs-B subunits using the whole size of the hydrophobic cleft as a ruler. The chain is Hexaprenyl-diphosphate synthase small subunit ((2E,6E)-farnesyl-diphosphate specific) (hexs-a) from Micrococcus luteus (Micrococcus lysodeikticus).